We begin with the raw amino-acid sequence, 416 residues long: Pentraxin fusion protein (416 aa).

The N-terminal stretch at M1–G14 is a signal peptide. N-linked (GlcNAc...) asparagine glycosylation is present at N129. The tract at residues G184–D206 is disordered. A Pentraxin (PTX) domain is found at T220–V416. N221 is a glycosylation site (N-linked (GlcNAc...) asparagine). C251 and C311 are disulfide-bonded. D275, Q353, D354, and Q364 together coordinate Ca(2+).

The cofactor is Ca(2+).

The sequence is that of Pentraxin fusion protein (pxn1) from Xenopus laevis (African clawed frog).